Here is a 305-residue protein sequence, read N- to C-terminus: MDRERPRKTREPASPGSVLSKRSKLSRKSLALRSLNKFHPYKAPSSVRSLKKAHTLVSNGDFFNGISLNCEFGKDFLREMDTPICTSKVICLPLDVHEIAPGRCLVLSPLGHACNMGFYCEKCTQSGQNSYSQFQGRGGNAKMAAQNSKDDLHSVTLTFYNQVSKVVQNKNFYLSLLSHSLTTIKKSFVQPSLLYSYTVLRALCDDVFPIFKDTENGLCMFALFKTDDLHVSETCLRHLVDNLIHYRVTLDCVKHTYMLKFSPIRAEANGMTIQEVEICEAITGLDFTDEIKQEIISGQELVSEL.

Basic and acidic residues predominate over residues 1-11 (MDRERPRKTRE). The disordered stretch occupies residues 1 to 24 (MDRERPRKTREPASPGSVLSKRSK). The CCCH-type zinc-finger motif lies at 104 to 230 (CLVLSPLGHA…FALFKTDDLH (127 aa)).

This sequence belongs to the herpesviridae NEC1 protein family. In terms of assembly, forms a heterohexameric complex with NEC2. Interacts with capsid vertex specific component 2/CVC2; this interaction directs the capsid to the host inner nuclear membrane to initiate budding. Post-translationally, phosphorylated at serine residues in the N-terminus. This phosphorylation regulates the localization within the inner nuclear membrane.

The protein resides in the host nucleus inner membrane. Functionally, plays an essential role in virion nuclear egress, the first step of virion release from infected cell. Within the host nucleus, NEC1 interacts with the newly formed capsid through the vertexes and directs it to the inner nuclear membrane by associating with NEC2. Induces the budding of the capsid at the inner nuclear membrane as well as its envelopment into the perinuclear space. There, the NEC1/NEC2 complex promotes the fusion of the enveloped capsid with the outer nuclear membrane and the subsequent release of the viral capsid into the cytoplasm where it will reach the secondary budding sites in the host Golgi or trans-Golgi network. The protein is Nuclear egress protein 1 of Equus caballus (Horse).